A 61-amino-acid chain; its full sequence is Sperm protamine P1 (61 aa).

The interval methionine 1–tyrosine 61 is disordered.

Belongs to the protamine P1 family. Testis.

It is found in the nucleus. The protein localises to the chromosome. In terms of biological role, protamines substitute for histones in the chromatin of sperm during the haploid phase of spermatogenesis. They compact sperm DNA into a highly condensed, stable and inactive complex. The sequence is that of Sperm protamine P1 (PRM1) from Setonix brachyurus (Quokka).